Here is a 155-residue protein sequence, read N- to C-terminus: D-aminoacyl-tRNA deacylase (155 aa).

Positions 137–138 (GP) match the Gly-cisPro motif, important for rejection of L-amino acids motif.

Belongs to the DTD family. Homodimer.

It is found in the cytoplasm. The enzyme catalyses glycyl-tRNA(Ala) + H2O = tRNA(Ala) + glycine + H(+). It carries out the reaction a D-aminoacyl-tRNA + H2O = a tRNA + a D-alpha-amino acid + H(+). An aminoacyl-tRNA editing enzyme that deacylates mischarged D-aminoacyl-tRNAs. Also deacylates mischarged glycyl-tRNA(Ala), protecting cells against glycine mischarging by AlaRS. Acts via tRNA-based rather than protein-based catalysis; rejects L-amino acids rather than detecting D-amino acids in the active site. By recycling D-aminoacyl-tRNA to D-amino acids and free tRNA molecules, this enzyme counteracts the toxicity associated with the formation of D-aminoacyl-tRNA entities in vivo and helps enforce protein L-homochirality. This Roseiflexus sp. (strain RS-1) protein is D-aminoacyl-tRNA deacylase.